We begin with the raw amino-acid sequence, 423 residues long: Growth hormone-releasing hormone receptor (423 aa).

The signal sequence occupies residues 1 to 22; sequence MDSGVWAACIFCLLSSLPVALG. The Extracellular segment spans residues 23-130; the sequence is HVHPECDFIT…DEKSYFSTVR (108 aa). Disulfide bonds link Cys-41/Cys-64, Cys-55/Cys-96, and Cys-78/Cys-112. Asn-50 is a glycosylation site (N-linked (GlcNAc...) asparagine). A helical membrane pass occupies residues 131-151; sequence IVYTTGHSVSAVALFVAIAIL. Over 152–167 the chain is Cytoplasmic; that stretch reads VALRRLHCPRNYIHSQ. Residues 168–188 form a helical membrane-spanning segment; the sequence is LFATFILKAGAVFLKDAALFH. Over 189–210 the chain is Extracellular; the sequence is SENTDHCSFSTVLCKVSVATSH. Residues 211-231 traverse the membrane as a helical segment; sequence FATMTNFSWLLAEAVYLTCLL. The Cytoplasmic segment spans residues 232–240; sequence ASTSPSTRR. The helical transmembrane segment at 241-261 threads the bilayer; it reads AFWWLVLAGWGLPLLFTGTWV. At 262–283 the chain is on the extracellular side; sequence GCKLAFEDVACWDLDDSSPYWW. A helical membrane pass occupies residues 284–304; sequence IIKGPIVLSVGVNFGLFLNII. The Cytoplasmic portion of the chain corresponds to 305 to 331; that stretch reads RILLRKLEPAQGSLHTQPQYWRLSKST. A helical membrane pass occupies residues 332 to 352; sequence LLLIPLFGIHYVIFNFLPDSA. Residues 353-357 lie on the Extracellular side of the membrane; the sequence is GLGIR. A helical transmembrane segment spans residues 358 to 378; it reads LPLELGLGSFQGFIVAILYCF. The Cytoplasmic portion of the chain corresponds to 379 to 423; that stretch reads LNQEVRTEISRRWHGHDPELLPAWRTHAKWAKPSRSRAKVLTTVC.

It belongs to the G-protein coupled receptor 2 family. Pituitary gland. Also detected in the lymphocytes and thymocytes.

Its subcellular location is the cell membrane. Receptor for GRF, coupled to G proteins which activate adenylyl cyclase. Stimulates somatotroph cell growth, growth hormone gene transcription and growth hormone secretion. This is Growth hormone-releasing hormone receptor (GHRHR) from Sus scrofa (Pig).